We begin with the raw amino-acid sequence, 100 residues long: Urease subunit gamma 2 (100 aa).

The protein belongs to the urease gamma subunit family. In terms of assembly, heterotrimer of UreA (gamma), UreB (beta) and UreC (alpha) subunits. Three heterotrimers associate to form the active enzyme.

It is found in the cytoplasm. It catalyses the reaction urea + 2 H2O + H(+) = hydrogencarbonate + 2 NH4(+). It functions in the pathway nitrogen metabolism; urea degradation; CO(2) and NH(3) from urea (urease route): step 1/1. Its function is as follows. Disrupting the ure2 operon has no effect on urease activity or pathogen survival in BALB/c mice when administered orally. This Brucella abortus (strain 2308) protein is Urease subunit gamma 2.